A 103-amino-acid chain; its full sequence is Signal recognition particle 19 kDa protein (103 aa).

It belongs to the SRP19 family. As to quaternary structure, part of the signal recognition particle protein translocation system, which is composed of SRP and FtsY. Archaeal SRP consists of a 7S RNA molecule of 300 nucleotides and two protein subunits: SRP54 and SRP19.

The protein resides in the cytoplasm. Involved in targeting and insertion of nascent membrane proteins into the cytoplasmic membrane. Binds directly to 7S RNA and mediates binding of the 54 kDa subunit of the SRP. The chain is Signal recognition particle 19 kDa protein from Methanopyrus kandleri (strain AV19 / DSM 6324 / JCM 9639 / NBRC 100938).